The primary structure comprises 367 residues: Small ribosomal subunit biogenesis GTPase RsgA (367 aa).

The 156-residue stretch at 112–267 (AEQVLATNVD…VIDTPGLREL (156 aa)) folds into the CP-type G domain. Residues 157–160 (NKSD) and 209–217 (GSSGAGKST) contribute to the GTP site. 4 residues coordinate Zn(2+): cysteine 291, cysteine 296, histidine 298, and cysteine 304.

It belongs to the TRAFAC class YlqF/YawG GTPase family. RsgA subfamily. Monomer. Associates with 30S ribosomal subunit, binds 16S rRNA. The cofactor is Zn(2+).

It localises to the cytoplasm. Functionally, one of several proteins that assist in the late maturation steps of the functional core of the 30S ribosomal subunit. Helps release RbfA from mature subunits. May play a role in the assembly of ribosomal proteins into the subunit. Circularly permuted GTPase that catalyzes slow GTP hydrolysis, GTPase activity is stimulated by the 30S ribosomal subunit. This is Small ribosomal subunit biogenesis GTPase RsgA from Opitutus terrae (strain DSM 11246 / JCM 15787 / PB90-1).